A 25-amino-acid polypeptide reads, in one-letter code: Snake venom metalloproteinase catroxase (25 aa).

A Ca(2+)-binding site is contributed by Glu-9.

This sequence belongs to the venom metalloproteinase (M12B) family. In terms of assembly, monomer. The cofactor is Zn(2+). In terms of tissue distribution, expressed by the venom gland.

It is found in the secreted. Inhibited by EDTA, beta-mercaptoethanol, but not by PMSF, p-tosyl-L-phenylalanine chloromethyl ketone, p-tosyl-L-lysine chloromethyl ketone, soybean trypsin inhibitor and aprotinin. Functionally, metalloprotease that is highly active against alpha-(FGA) and beta-chains (FGB) of fibrinogen molecules. The sequence is that of Snake venom metalloproteinase catroxase from Crotalus atrox (Western diamondback rattlesnake).